The following is a 551-amino-acid chain: Cytochrome bc1 complex cytochrome b subunit (551 aa).

A helical membrane pass occupies residues 44-64 (FLLGEIALYSFIVLLLTGVYL). Heme contacts are provided by His-113 and His-127. The next 3 membrane-spanning stretches (helical) occupy residues 117–137 (ALMF…TGAF), 145–165 (WVIG…GYSM), and 188–208 (VIGT…TILI). Residues His-215 and His-230 each contribute to the heme site. Transmembrane regions (helical) follow at residues 216–236 (ILLI…LVWF), 265–285 (SGAF…FLQI), 334–354 (PVWV…YPFL), 380–400 (IGAM…NDII), and 417–437 (IGMV…CIGL). The disordered stretch occupies residues 532–551 (ALREHQDSIASSPNGERGKH).

Belongs to the cytochrome b family. The cytochrome bc1 complex is composed of a cytochrome b (QcrB), the Rieske iron-sulfur protein (QcrA) and a diheme cytochrome c (QcrC) subunit. Heme serves as cofactor.

The protein resides in the cell membrane. It catalyses the reaction a quinol + 2 Fe(III)-[cytochrome c](out) = a quinone + 2 Fe(II)-[cytochrome c](out) + 2 H(+)(out). Cytochrome b subunit of the cytochrome bc1 complex, an essential component of the respiratory electron transport chain required for ATP synthesis. The bc1 complex catalyzes the oxidation of ubiquinol and the reduction of cytochrome c in the respiratory chain. The bc1 complex operates through a Q-cycle mechanism that couples electron transfer to generation of the proton gradient that drives ATP synthesis. The cytochrome b subunit contains two ubiquinol reactive sites: the oxidation (QP) site and the reduction (QN) site. The chain is Cytochrome bc1 complex cytochrome b subunit (qcrB) from Mycobacterium leprae (strain TN).